The sequence spans 314 residues: tRNA dimethylallyltransferase (314 aa).

An ATP-binding site is contributed by 13–20 (GPTAVGKT). 15–20 (TAVGKT) contacts substrate. Residues 38 to 41 (DSMQ) form an interaction with substrate tRNA region.

Belongs to the IPP transferase family. Monomer. Requires Mg(2+) as cofactor.

It catalyses the reaction adenosine(37) in tRNA + dimethylallyl diphosphate = N(6)-dimethylallyladenosine(37) in tRNA + diphosphate. Catalyzes the transfer of a dimethylallyl group onto the adenine at position 37 in tRNAs that read codons beginning with uridine, leading to the formation of N6-(dimethylallyl)adenosine (i(6)A). This Bacillus subtilis (strain 168) protein is tRNA dimethylallyltransferase.